We begin with the raw amino-acid sequence, 529 residues long: Bifunctional purine biosynthesis protein PurH (529 aa).

The region spanning 1–148 (MEQSFLPIRC…KNYKYVTVVV (148 aa)) is the MGS-like domain.

This sequence belongs to the PurH family.

It catalyses the reaction (6R)-10-formyltetrahydrofolate + 5-amino-1-(5-phospho-beta-D-ribosyl)imidazole-4-carboxamide = 5-formamido-1-(5-phospho-D-ribosyl)imidazole-4-carboxamide + (6S)-5,6,7,8-tetrahydrofolate. It carries out the reaction IMP + H2O = 5-formamido-1-(5-phospho-D-ribosyl)imidazole-4-carboxamide. The protein operates within purine metabolism; IMP biosynthesis via de novo pathway; 5-formamido-1-(5-phospho-D-ribosyl)imidazole-4-carboxamide from 5-amino-1-(5-phospho-D-ribosyl)imidazole-4-carboxamide (10-formyl THF route): step 1/1. It functions in the pathway purine metabolism; IMP biosynthesis via de novo pathway; IMP from 5-formamido-1-(5-phospho-D-ribosyl)imidazole-4-carboxamide: step 1/1. The chain is Bifunctional purine biosynthesis protein PurH from Wigglesworthia glossinidia brevipalpis.